The chain runs to 331 residues: Hyaluronidase A (331 aa).

Disulfide bonds link cysteine 19–cysteine 308 and cysteine 185–cysteine 197. N-linked (GlcNAc...) asparagine glycans are attached at residues asparagine 79 and asparagine 99. Glutamate 109 functions as the Proton donor in the catalytic mechanism. Residue asparagine 127 is glycosylated (N-linked (GlcNAc...) asparagine). Asparagine 325 carries N-linked (GlcNAc...) asparagine glycosylation.

It belongs to the glycosyl hydrolase 56 family. As to expression, expressed by the venom gland.

The protein resides in the secreted. The catalysed reaction is Random hydrolysis of (1-&gt;4)-linkages between N-acetyl-beta-D-glucosamine and D-glucuronate residues in hyaluronate.. In terms of biological role, hydrolyzes high molecular weight hyaluronic acid to produce small oligosaccharides. This Vespula vulgaris (Yellow jacket) protein is Hyaluronidase A.